The primary structure comprises 495 residues: Putative aldehyde dehydrogenase DhaS (495 aa).

244-249 lines the NAD(+) pocket; it reads GSTEIG. Catalysis depends on residues E266 and C300.

It belongs to the aldehyde dehydrogenase family.

It catalyses the reaction an aldehyde + NAD(+) + H2O = a carboxylate + NADH + 2 H(+). The protein is Putative aldehyde dehydrogenase DhaS (dhaS) of Bacillus subtilis (strain 168).